A 146-amino-acid chain; its full sequence is 3-hydroxyacyl-[acyl-carrier-protein] dehydratase FabZ (146 aa).

The active site involves H49.

It belongs to the thioester dehydratase family. FabZ subfamily.

Its subcellular location is the cytoplasm. The catalysed reaction is a (3R)-hydroxyacyl-[ACP] = a (2E)-enoyl-[ACP] + H2O. In terms of biological role, involved in unsaturated fatty acids biosynthesis. Catalyzes the dehydration of short chain beta-hydroxyacyl-ACPs and long chain saturated and unsaturated beta-hydroxyacyl-ACPs. This Pseudomonas savastanoi pv. phaseolicola (strain 1448A / Race 6) (Pseudomonas syringae pv. phaseolicola (strain 1448A / Race 6)) protein is 3-hydroxyacyl-[acyl-carrier-protein] dehydratase FabZ.